We begin with the raw amino-acid sequence, 132 residues long: Small ribosomal subunit protein uS8 (132 aa).

It belongs to the universal ribosomal protein uS8 family. As to quaternary structure, part of the 30S ribosomal subunit. Contacts proteins S5 and S12.

Functionally, one of the primary rRNA binding proteins, it binds directly to 16S rRNA central domain where it helps coordinate assembly of the platform of the 30S subunit. The sequence is that of Small ribosomal subunit protein uS8 from Kocuria rhizophila (strain ATCC 9341 / DSM 348 / NBRC 103217 / DC2201).